The sequence spans 189 residues: dCTP deaminase (189 aa).

DCTP-binding positions include 112–117, 136–138, Gln-157, Tyr-171, and Gln-181; these read KSTYAR and TLE. Glu-138 (proton donor/acceptor) is an active-site residue.

It belongs to the dCTP deaminase family. Homotrimer.

It catalyses the reaction dCTP + H2O + H(+) = dUTP + NH4(+). Its pathway is pyrimidine metabolism; dUMP biosynthesis; dUMP from dCTP (dUTP route): step 1/2. Its function is as follows. Catalyzes the deamination of dCTP to dUTP. This Burkholderia thailandensis (strain ATCC 700388 / DSM 13276 / CCUG 48851 / CIP 106301 / E264) protein is dCTP deaminase.